A 1403-amino-acid chain; its full sequence is Baculoviral IAP repeat-containing protein 1f (1403 aa).

3 BIR repeats span residues 60–127 (EAKR…CEFL), 159–227 (EEAR…CEFL), and 278–345 (EELR…CVFL). The Zn(2+) site is built by Cys315, Cys318, His335, and Cys342. An NACHT domain is found at 464–759 (SVMCVEGEAG…EFLAAVRLTE (296 aa)). 473-478 (GSGKTT) contributes to the ATP binding site.

In terms of assembly, component of the NLRC4 inflammasome, at least composed of NLRC4, caspase-1 (CASP1) and some NAIP protein. (Microbial infection) Interacts with S.typhimurium (Salmonella) flagellin.

Its function is as follows. Sensor component of the NLRC4 inflammasome that specifically recognizes and binds flagellin from pathogenic bacteria. Association of pathogenic bacteria proteins drives in turn drive assembly and activation of the NLRC4 inflammasome, promoting caspase-1 activation, cytokine production and macrophage pyroptosis. The NLRC4 inflammasome is activated as part of the innate immune response to a range of intracellular bacteria. The NLRC4 inflammasome senses Gram-negative bacteria such as L.pneumophila and P.aeruginosa, enteric pathogens S.typhimurium (Salmonella) and S.flexneri. May contribute to prevent motor-neuron apoptosis induced by a variety of signals. The protein is Baculoviral IAP repeat-containing protein 1f (Naip6) of Mus musculus (Mouse).